A 137-amino-acid chain; its full sequence is Phosphoribosyl-AMP cyclohydrolase (137 aa).

Residue Asp84 coordinates Mg(2+). A Zn(2+)-binding site is contributed by Cys85. The Mg(2+) site is built by Asp86 and Asp88. 2 residues coordinate Zn(2+): Cys101 and Cys108.

Belongs to the PRA-CH family. In terms of assembly, homodimer. The cofactor is Mg(2+). It depends on Zn(2+) as a cofactor.

It is found in the cytoplasm. It catalyses the reaction 1-(5-phospho-beta-D-ribosyl)-5'-AMP + H2O = 1-(5-phospho-beta-D-ribosyl)-5-[(5-phospho-beta-D-ribosylamino)methylideneamino]imidazole-4-carboxamide. It functions in the pathway amino-acid biosynthesis; L-histidine biosynthesis; L-histidine from 5-phospho-alpha-D-ribose 1-diphosphate: step 3/9. In terms of biological role, catalyzes the hydrolysis of the adenine ring of phosphoribosyl-AMP. This is Phosphoribosyl-AMP cyclohydrolase from Chlorobaculum parvum (strain DSM 263 / NCIMB 8327) (Chlorobium vibrioforme subsp. thiosulfatophilum).